Here is a 248-residue protein sequence, read N- to C-terminus: DCN1-like protein 4 (248 aa).

A disordered region spans residues 1 to 35; the sequence is MPRGKRRAADTISDNMDHGQPKRARTSYTSIPTQQ. A compositionally biased stretch (polar residues) spans 26 to 35; the sequence is TSYTSIPTQQ. Positions 47 to 235 constitute a DCUN1 domain; sequence FSQKRCMAWF…MLDEFVEWLR (189 aa).

The protein localises to the nucleus. Its function is as follows. Inhibits neddylation of cullin components of SCF-type E3 ubiquitin ligase complexes and thus regulates SCF-type complex activity. Essential for development. Function inhibits cell proliferation and cell growth. In Drosophila melanogaster (Fruit fly), this protein is DCN1-like protein 4.